A 326-amino-acid polypeptide reads, in one-letter code: UDP-N-acetylglucosamine transporter (326 aa).

8 helical membrane passes run 4–24 (NLKY…VLTM), 38–58 (LSST…IFLV), 136–156 (LGMY…FVQW), 174–194 (FVGL…GVYF), 212–232 (LGFF…GELV), 243–263 (QLTW…AAVI), 269–289 (ILKG…SYFW), and 293–313 (FVPT…TFLY).

Belongs to the nucleotide-sugar transporter family. SLC35A subfamily. Interacts with SLC35A2; the interaction is reduced in the presence of SLC35A4. Found in a complex with SLC35A2 and SLC35A4. Interacts with MGAT4B. In terms of processing, O-Glcnacylation regulates the stability of SLC35A3 and the specific complex formation with MGAT4B.

The protein localises to the golgi apparatus membrane. It carries out the reaction UMP(out) + UDP-N-acetyl-alpha-D-glucosamine(in) = UMP(in) + UDP-N-acetyl-alpha-D-glucosamine(out). In terms of biological role, transports diphosphate-N-acetylglucosamine (UDP-GlcNAc) from the cytosol into the lumen of the Golgi apparatus, functioning as an antiporter that exchanges UDP-N-acetyl-alpha-D-glucosamine for UMP. May supply UDP-GlcNAc as substrate for Golgi-resident glycosyltransferases that generate highly branched, multiantennary complex N-glycans and keratan sulfate. However, the exact role of SLC35A3 still needs to be elucidated, it could be a member of a catalytically more efficient multiprotein complex rather than function independently as a single transporter. In Rattus norvegicus (Rat), this protein is UDP-N-acetylglucosamine transporter (Slc35a3).